The primary structure comprises 450 residues: Probable ECA polymerase (450 aa).

11 helical membrane passes run 6-26 (FSGL…LTWF), 37-57 (VFFS…TSVL), 63-83 (VGVA…CFYA), 118-138 (VILM…NGFL), 155-175 (GVAL…VYFL), 181-201 (AWLF…MIVG), 207-227 (IIIA…ISLW), 228-248 (MLAA…LKRY), 341-361 (LVVM…GLII), 378-398 (YKAA…IVLA), and 410-430 (VFFI…YWLF).

Belongs to the WzyE family. Probably part of a complex composed of WzxE, WzyE and WzzE.

It localises to the cell inner membrane. It functions in the pathway bacterial outer membrane biogenesis; enterobacterial common antigen biosynthesis. Functionally, probably involved in the polymerization of enterobacterial common antigen (ECA) trisaccharide repeat units. The polypeptide is Probable ECA polymerase (Shigella sonnei (strain Ss046)).